The sequence spans 350 residues: GTPase Obg (350 aa).

The 159-residue stretch at 1–159 folds into the Obg domain; it reads MRFIDQTEIF…FRLHLELKLL (159 aa). The OBG-type G domain occupies 160-328; sequence AEVGIIGLPN…LLQQVWEELD (169 aa). GTP-binding positions include 166 to 173, 191 to 195, 213 to 216, 280 to 283, and 309 to 311; these read GLPNAGKS, FTTLI, DIPG, NKID, and SAV. Mg(2+) is bound by residues Ser173 and Thr193.

Belongs to the TRAFAC class OBG-HflX-like GTPase superfamily. OBG GTPase family. Monomer. It depends on Mg(2+) as a cofactor.

It localises to the cytoplasm. An essential GTPase which binds GTP, GDP and possibly (p)ppGpp with moderate affinity, with high nucleotide exchange rates and a fairly low GTP hydrolysis rate. Plays a role in control of the cell cycle, stress response, ribosome biogenesis and in those bacteria that undergo differentiation, in morphogenesis control. This is GTPase Obg from Acaryochloris marina (strain MBIC 11017).